Here is a 442-residue protein sequence, read N- to C-terminus: 6-phospho-alpha-glucosidase 1 (442 aa).

6 to 72 (FSVLIAGGGS…PEVEFLATTD (67 aa)) is an NAD(+) binding site. Residues Arg-95 and Asn-149 each contribute to the substrate site. Cys-171 provides a ligand contact to Mn(2+). Asp-172 (proton donor) is an active-site residue. His-202 is a Mn(2+) binding site. Tyr-265 serves as the catalytic Proton acceptor. Substrate is bound at residue Arg-285.

The protein belongs to the glycosyl hydrolase 4 family. In terms of assembly, homodimer. May also form homotetramer. Requires Mn(2+) as cofactor. The cofactor is Co(2+). Ni(2+) serves as cofactor. Fe(2+) is required as a cofactor. It depends on Mg(2+) as a cofactor. Requires NAD(+) as cofactor.

The enzyme catalyses alpha-maltose 6'-phosphate + H2O = D-glucose 6-phosphate + D-glucose. Its activity is regulated as follows. Is inhibited by EDTA in vitro. Its function is as follows. Is probably involved in the catabolism of alpha-glycosides accumulated via a phosphoenolpyruvate-dependent phosphotransferase system (PEP-PTS). Hydrolyzes a wide variety of 6-phospho-alpha-D-glucosides including the five isomeric derivatives of sucrose, i.e. trehalulose-6'-phosphate, turanose-6'-phosphate, maltulose-6'-phosphate, leucrose-6'-phosphate, and palatinose-6'-phosphate, but is not active on sucrose-6-phosphate. Can also hydrolyze maltose-6'-phosphate and methyl-alpha-glucose-6-phosphate, and poorly, trehalose-6-phosphate. Fails to hydrolyze beta-O-linked phosphorylated disaccharides such as cellobiose-6'-phosphate and gentiobiose-6'-phosphate. Does not seem to be involved in maltose catabolism. This chain is 6-phospho-alpha-glucosidase 1 (simA), found in Lacticaseibacillus paracasei (strain ATCC 334 / BCRC 17002 / CCUG 31169 / CIP 107868 / KCTC 3260 / NRRL B-441) (Lactobacillus paracasei).